Consider the following 90-residue polypeptide: MSSLDKTMYFDFGANQPKDVHDTLVTVYQALEEKGYNPINQIVGYLLSGDPAYIPRIDDARNLIRKHERDEIIEELVRVYLNQNGSVKKS.

This sequence belongs to the UPF0297 family.

In Levilactobacillus brevis (strain ATCC 367 / BCRC 12310 / CIP 105137 / JCM 1170 / LMG 11437 / NCIMB 947 / NCTC 947) (Lactobacillus brevis), this protein is UPF0297 protein LVIS_1222.